Consider the following 789-residue polypeptide: Trans-4-hydroxy-L-proline dehydratase (789 aa).

Residues 7-663 (ERTKKLREES…IMGASPNGRL (657 aa)) form the PFL domain. C434 acts as the Cysteine radical intermediate in catalysis. Catalysis depends on E436, which acts as the Proton acceptor. The region spanning 670–789 (EGISPEKGGD…EIIGRTEQTF (120 aa)) is the Glycine radical domain. G765 is modified (glycine radical).

This sequence belongs to the glycyl radical enzyme (GRE) family. HYPD subfamily. Requires the activating protein PflE to generate the key active site glycyl radical on Gly-765 that is involved in catalysis.

It carries out the reaction trans-4-hydroxy-L-proline = (S)-1-pyrroline-5-carboxylate + H2O + H(+). Glycine radical enzyme that catalyzes the dehydration of the non-proteinogenic amino acid trans-4-hydroxy-L-proline (Hyp) to produce delta(1)-pyrroline-5-carboxylate (P5C). Is involved in the anaerobic degradation of 4-hydroxyproline. The protein is Trans-4-hydroxy-L-proline dehydratase of Clostridioides difficile (Peptoclostridium difficile).